Reading from the N-terminus, the 145-residue chain is 3-hydroxyacyl-[acyl-carrier-protein] dehydratase FabZ (145 aa).

The active site involves histidine 49.

This sequence belongs to the thioester dehydratase family. FabZ subfamily.

The protein localises to the cytoplasm. It catalyses the reaction a (3R)-hydroxyacyl-[ACP] = a (2E)-enoyl-[ACP] + H2O. In terms of biological role, involved in unsaturated fatty acids biosynthesis. Catalyzes the dehydration of short chain beta-hydroxyacyl-ACPs and long chain saturated and unsaturated beta-hydroxyacyl-ACPs. In Rickettsia felis (strain ATCC VR-1525 / URRWXCal2) (Rickettsia azadi), this protein is 3-hydroxyacyl-[acyl-carrier-protein] dehydratase FabZ.